The following is a 95-amino-acid chain: L-amino-acid oxidase (95 aa).

This sequence belongs to the flavin monoamine oxidase family. FIG1 subfamily. In terms of assembly, homodimer; non-covalently linked. It depends on FAD as a cofactor. N-glycosylated. Expressed by the venom gland.

It is found in the secreted. It catalyses the reaction an L-alpha-amino acid + O2 + H2O = a 2-oxocarboxylate + H2O2 + NH4(+). The catalysed reaction is L-leucine + O2 + H2O = 4-methyl-2-oxopentanoate + H2O2 + NH4(+). It carries out the reaction L-phenylalanine + O2 + H2O = 3-phenylpyruvate + H2O2 + NH4(+). The enzyme catalyses L-tryptophan + O2 + H2O = indole-3-pyruvate + H2O2 + NH4(+). It catalyses the reaction L-methionine + O2 + H2O = 4-methylsulfanyl-2-oxobutanoate + H2O2 + NH4(+). The catalysed reaction is L-arginine + O2 + H2O = 5-guanidino-2-oxopentanoate + H2O2 + NH4(+). Its function is as follows. Catalyzes an oxidative deamination of predominantly hydrophobic and aromatic L-amino acids, thus producing hydrogen peroxide that may contribute to the diverse toxic effects of this enzyme. Is highly active on L-Met, L-Leu, L-Phe, L-Trp, and L-Arg, and no weakly or no active on L-His, L-Tyr, L-Ile, L-Gln, and L-Lys. Exhibits diverse biological activities, such as antibacterial activity against both Gram-positive (B.subtilis) and Gram-negative (E.coli) bacteria, and inhibition of ADP- or collagen-induced platelet aggregation. Effects of snake L-amino oxidases on platelets are controversial, since they either induce aggregation or inhibit agonist-induced aggregation. These different effects are probably due to different experimental conditions. This protein may also induce hemorrhage, hemolysis, edema, apoptosis, and have antiparasitic activities. The chain is L-amino-acid oxidase from Naja oxiana (Central Asian cobra).